The following is a 298-amino-acid chain: Aquaporin NIP2-1 (298 aa).

N-linked (GlcNAc...) asparagine glycans are attached at residues asparagine 4, asparagine 13, and asparagine 26. A run of 2 helical transmembrane segments spans residues 51–71 (VVSE…AAGI) and 85–105 (SIAG…ISGA). The short motif at 108–110 (NPA) is the NPA 1 element. The next 3 membrane-spanning stretches (helical) occupy residues 124–144 (IQVP…SFVL), 166–186 (SLVV…AVAT), and 194–214 (LAGL…GAIS). Positions 219–221 (NPA) match the NPA 2 motif. Residues 237–257 (WIYFLGPVMGTLSGAWTYTFI) form a helical membrane-spanning segment.

Belongs to the MIP/aquaporin (TC 1.A.8) family. NIP (TC 1.A.8.12) subfamily. As to expression, mainly expressed in the roots. In roots, it localizes in the main and lateral roots, but not in root hairs. Within a root, it localizes on the plasma membrane of the distal side of both exodermis and endodermis, where casparian strips exist (at protein level). Expressed low levels in leaves and anthers.

The protein localises to the cell membrane. Silicon influx transporter responsible for silicon transport from the external solution to the root cells. Is coupled with the silicon efflux transporter LSI2 in both exodermal and endodermal root cells for an efficient silicon transport across the cells into the stele. Silicon is beneficial to plant growth and helps plants to overcome abiotic and biotic stresses by preventing lodging (falling over) and increasing resistance to pests and diseases, as well as other stresses. Is coupled with LSI2 transporter in roots for efficient uptake of arsenite, which is further dispatched in shoots and grains. Mediates uptake of methylated arsenic species in roots. This is Aquaporin NIP2-1 from Oryza sativa subsp. japonica (Rice).